The sequence spans 802 residues: MAHRCLLLWSRGGCRRGLPPLLVPRGCLGPDRRPCLRTLYQYATVQTASSRRSLLRDVIAAYQRFCSRPPKGFEKYFPNGKNGKKASEPKEAVGEKKEPQPSGPQPSGGAGGGGGKRRGKKEDSHWWSRFQKGDFPWDDKDFRMYFLWTALFWGGVMIYFVFKSSGREITWKDFVNNYLSKGVVDRLEVVNKRFVRVTFTPGKTPVDGQYVWFNIGSVDTFERNLETLQQELGIEGENRVPVVYIAESDGSFLLSMLPTVLIIAFLLYTIRRGPAGIGRTGRGMGGLFSVGETTAKVLKDEIDVKFKDVAGCEEAKLEIMEFVNFLKNPKQYQDLGAKIPKGAILTGPPGTGKTLLAKATAGEANVPFITVSGSEFLEMFVGVGPARVRDLFALARKNAPCILFIDEIDAVGRKRGRGNFGGQSEQENTLNQLLVEMDGFNTTTNVVILAGTNRPDILDPALLRPGRFDRQIFIGPPDIKGRASIFKVHLRPLKLDSALEKDKLARKLASLTPGFSGADVANVCNEAALIAARHLSDAINEKHFEQAIERVIGGLEKKTQVLQPEEKKTVAYHEAGHAVAGWYLEHADPLLKVSIIPRGKGLGYAQYLPKEQYLYTKEQLLDRMCMTLGGRVSEEIFFGRITTGAQDDLRKVTQSAYAQIVQFGMNEKVGQISFDLPRQGDMVLEKPYSEATARMIDDEVRILISDAYRRTVALLTEKKADVEKVALLLLEKEVLDKNDMVQLLGPRPFTEKSTYEEFVEGTGSLDEDTSLPEGLQDWNKEREKEEKKEKEKEEPLNEKVVS.

Residues 1 to 38 constitute a mitochondrion transit peptide; the sequence is MAHRCLLLWSRGGCRRGLPPLLVPRGCLGPDRRPCLRT. Residues 39–66 constitute a propeptide, removed in mature form; the sequence is LYQYATVQTASSRRSLLRDVIAAYQRFC. The tract at residues 76 to 124 is disordered; the sequence is YFPNGKNGKKASEPKEAVGEKKEPQPSGPQPSGGAGGGGGKRRGKKEDS. The span at 85-99 shows a compositional bias: basic and acidic residues; the sequence is KASEPKEAVGEKKEP. Position 116 is an N6-succinyllysine (Lys116). Transmembrane regions (helical) follow at residues 142-162 and 250-270; these read FRMYFLWTALFWGGVMIYFVF and GSFLLSMLPTVLIIAFLLYTI. Val309, Ala310, Thr351, Gly352, Lys353, Thr354, Leu355, and His489 together coordinate ATP. Residue His573 participates in Zn(2+) binding. Residue Glu574 is part of the active site. Residues His577 and Asp648 each contribute to the Zn(2+) site. The disordered stretch occupies residues 759–802; sequence VEGTGSLDEDTSLPEGLQDWNKEREKEEKKEKEKEEPLNEKVVS. A compositionally biased stretch (basic and acidic residues) spans 778 to 802; it reads WNKEREKEEKKEKEKEEPLNEKVVS.

This sequence in the N-terminal section; belongs to the AAA ATPase family. It in the C-terminal section; belongs to the peptidase M41 family. Homohexamer. Forms heterohexamers with SPG7 and AFG3L1. The m-AAA protease is either composed of homohexamers of AFG3L2 or heterohexamers of AFG3L1, AFG3L2 and/or SPG7. Interacts with MAIP1. Interacts with DNAJC19. Interacts with PHB2. The cofactor is Zn(2+). Upon import into the mitochondrion, the N-terminal transit peptide is cleaved to generate an intermediate form which undergoes autocatalytic proteolytic processing to generate the proteolytically active mature form. In terms of tissue distribution, highly expressed in the cerebellar Purkinje cells.

The protein resides in the mitochondrion inner membrane. It catalyses the reaction ATP + H2O = ADP + phosphate + H(+). In terms of biological role, catalytic component of the m-AAA protease, a protease that plays a key role in proteostasis of inner mitochondrial membrane proteins, and which is essential for axonal and neuron development. AFG3L2 possesses both ATPase and protease activities: the ATPase activity is required to unfold substrates, threading them into the internal proteolytic cavity for hydrolysis into small peptide fragments. The m-AAA protease carries out protein quality control in the inner membrane of the mitochondria by mediating degradation of mistranslated or misfolded polypeptides. The m-AAA protease complex also promotes the processing and maturation of mitochondrial proteins, such as MRPL32/bL32m, PINK1 and SP7. Mediates protein maturation of the mitochondrial ribosomal subunit MRPL32/bL32m by catalyzing the cleavage of the presequence of MRPL32/bL32m prior to assembly into the mitochondrial ribosome. Required for SPG7 maturation into its active mature form after SPG7 cleavage by mitochondrial-processing peptidase (MPP). Required for the maturation of PINK1 into its 52kDa mature form after its cleavage by mitochondrial-processing peptidase (MPP). Acts as a regulator of calcium in neurons by mediating degradation of SMDT1/EMRE before its assembly with the uniporter complex, limiting the availability of SMDT1/EMRE for MCU assembly and promoting efficient assembly of gatekeeper subunits with MCU. Promotes the proteolytic degradation of GHITM upon hyperpolarization of mitochondria: progressive GHITM degradation leads to respiratory complex I degradation and broad reshaping of the mitochondrial proteome by AFG3L2. Also acts as a regulator of mitochondrial glutathione homeostasis by mediating cleavage and degradation of SLC25A39. SLC25A39 cleavage is prevented when SLC25A39 binds iron-sulfur. Involved in the regulation of OMA1-dependent processing of OPA1. May act by mediating processing of OMA1 precursor, participating in OMA1 maturation. This Mus musculus (Mouse) protein is Mitochondrial inner membrane m-AAA protease component AFG3L2.